The chain runs to 946 residues: Protein translocase subunit SecA (946 aa).

ATP is bound by residues Q90, 108–112 (GEGKT), and D509.

This sequence belongs to the SecA family. As to quaternary structure, monomer and homodimer. Part of the essential Sec protein translocation apparatus which comprises SecA, SecYEG and auxiliary proteins SecDF. Other proteins may also be involved.

Its subcellular location is the cell inner membrane. The protein resides in the cellular thylakoid membrane. The protein localises to the cytoplasm. It catalyses the reaction ATP + H2O + cellular proteinSide 1 = ADP + phosphate + cellular proteinSide 2.. Part of the Sec protein translocase complex. Interacts with the SecYEG preprotein conducting channel. Has a central role in coupling the hydrolysis of ATP to the transfer of proteins into and across the cell membrane, serving as an ATP-driven molecular motor driving the stepwise translocation of polypeptide chains across the membrane. Its function is as follows. Probably participates in protein translocation into and across both the cytoplasmic and thylakoid membranes in cyanobacterial cells. This Synechococcus sp. (strain RCC307) protein is Protein translocase subunit SecA.